Here is a 113-residue protein sequence, read N- to C-terminus: Large ribosomal subunit protein eL31 (113 aa).

Belongs to the eukaryotic ribosomal protein eL31 family.

This chain is Large ribosomal subunit protein eL31 (RPL31), found in Candida glabrata (strain ATCC 2001 / BCRC 20586 / JCM 3761 / NBRC 0622 / NRRL Y-65 / CBS 138) (Yeast).